The chain runs to 223 residues: ATP synthase subunit a 2 (223 aa).

5 helical membrane passes run 17 to 37 (VAITRPVVTTWVIMAALALVC), 77 to 97 (FLPLLGTLIIFLVVANLSGVL), 106 to 126 (KIETPAALALIVFFSVHYFGV), 173 to 193 (FIIGLVVALAGLFVPIPLMAL), and 195 to 215 (ILVGLVQAYIFTVLATVFIGA).

This sequence belongs to the ATPase A chain family. In terms of assembly, F-type ATPases have 2 components, CF(1) - the catalytic core - and CF(0) - the membrane proton channel. CF(1) has five subunits: alpha(3), beta(3), gamma(1), delta(1), epsilon(1). CF(0) has four main subunits: a, b, b' and c.

The protein resides in the cell inner membrane. In terms of biological role, key component of the proton channel; it plays a direct role in the translocation of protons across the membrane. The sequence is that of ATP synthase subunit a 2 from Bradyrhizobium sp. (strain BTAi1 / ATCC BAA-1182).